A 537-amino-acid chain; its full sequence is Putative cysteine ligase BshC (537 aa).

A coiled-coil region spans residues 422–450 (IEKVEGMIEQQRRLNQDLLDEVAGNQNNI).

The protein belongs to the BshC family.

Involved in bacillithiol (BSH) biosynthesis. May catalyze the last step of the pathway, the addition of cysteine to glucosamine malate (GlcN-Mal) to generate BSH. The sequence is that of Putative cysteine ligase BshC from Staphylococcus aureus (strain bovine RF122 / ET3-1).